The chain runs to 157 residues: Biotin carboxyl carrier protein of acetyl-CoA carboxylase (157 aa).

Residues 80–156 (YATIVSPMVG…DCGQALMKVE (77 aa)) form the Biotinyl-binding domain. An N6-biotinyllysine modification is found at K122.

Its subcellular location is the plastid. The protein resides in the chloroplast. Its pathway is lipid metabolism; fatty acid biosynthesis. Functionally, this protein is a component of the acetyl coenzyme A carboxylase complex; first, biotin carboxylase catalyzes the carboxylation of the carrier protein and then the transcarboxylase transfers the carboxyl group to form malonyl-CoA. This is Biotin carboxyl carrier protein of acetyl-CoA carboxylase (accB) from Porphyra purpurea (Red seaweed).